A 280-amino-acid chain; its full sequence is Lysosome-associated membrane glycoprotein 5 (280 aa).

An N-terminal signal peptide occupies residues 1–29 (MDLRRRALLGVDGLRVLLMLFHTVTRIMA). The Extracellular segment spans residues 30–235 (EQEVENLSGL…PVDEREQLEE (206 aa)). N-linked (GlcNAc...) asparagine glycosylation is found at Asn35 and Asn53. A helical membrane pass occupies residues 236–256 (TLPLILGLILGLVIVVTLVIY). The Cytoplasmic portion of the chain corresponds to 257–280 (HIHHKMTANQVQIPRDRSQYKHMG).

This sequence belongs to the LAMP family. In terms of processing, glycosylated.

The protein resides in the cytoplasmic vesicle membrane. It is found in the cell membrane. Its subcellular location is the cell projection. The protein localises to the dendrite. It localises to the cytoplasmic vesicle. The protein resides in the secretory vesicle. It is found in the synaptic vesicle membrane. Its subcellular location is the growth cone membrane. The protein localises to the early endosome membrane. It localises to the recycling endosome. The protein resides in the endoplasmic reticulum-Golgi intermediate compartment membrane. It is found in the endosome membrane. Plays a role in short-term synaptic plasticity in a subset of GABAergic neurons in the brain. This chain is Lysosome-associated membrane glycoprotein 5 (LAMP5), found in Bos taurus (Bovine).